Here is a 72-residue protein sequence, read N- to C-terminus: Crustacean hyperglycemic hormone (72 aa).

Q1 is subject to Pyrrolidone carboxylic acid; partial. Intrachain disulfides connect C7-C43, C23-C39, and C26-C52. The residue at position 72 (V72) is a Valine amide.

This sequence belongs to the arthropod CHH/MIH/GIH/VIH hormone family. The N-terminus forms pyrrolidone carboxylic acid in isoform CHH-II and is free in isoform CHH-I. Produced by the medulla terminalis X-organ in the eyestalks and transported to the sinus gland where they are stored and released.

Its subcellular location is the secreted. Hormone found in the sinus gland of isopods and decapods which controls the blood sugar level. Has a secretagogue action over the amylase released from the midgut gland. May act as a stress hormone and may be involved in the control of molting and reproduction. The protein is Crustacean hyperglycemic hormone of Cancer pagurus (Rock crab).